The sequence spans 253 residues: Chloride intracellular channel protein 4 (253 aa).

At Ala2 the chain carries N-acetylalanine. Residues 2-101 (ALSMPLNGLK…EEFLEEVLCP (100 aa)) are required for insertion into the membrane. Ser4 bears the Phosphoserine mark. Residue Lys24 is modified to N6-acetyllysine. Residues 35 to 38 (CPFS) carry the G-site motif. Residues 37–57 (FSQRLFMILWLKGVVFSVTTV) form a helical membrane-spanning segment. Residues 81–244 (NSEVKTDVNK…PSDKEVEIAY (164 aa)) enclose the GST C-terminal domain. At Lys130 the chain carries N6-acetyllysine. 3 positions are modified to phosphoserine: Ser132, Ser167, and Ser236. A Phosphotyrosine modification is found at Tyr244.

The protein belongs to the chloride channel CLIC family. As to quaternary structure, monomer. Interacts with HRH3. As to expression, detected in brain, in cell bodies and dendrites of Purkinje cells in cerebellar neurons (at protein level). Expressed neonatal and adult cardiomyocytes (at protein level). Marked expression was found in hippocampus and cerebellum, and in many other tissues.

The protein localises to the cytoplasm. It is found in the cytoskeleton. Its subcellular location is the microtubule organizing center. The protein resides in the centrosome. It localises to the cytoplasmic vesicle membrane. The protein localises to the nucleus. It is found in the cell membrane. Its subcellular location is the mitochondrion. The protein resides in the cell junction. It localises to the endoplasmic reticulum membrane. It catalyses the reaction chloride(in) = chloride(out). The catalysed reaction is thiocyanate(in) = thiocyanate(out). The enzyme catalyses nitrate(in) = nitrate(out). It carries out the reaction iodide(out) = iodide(in). It catalyses the reaction bromide(in) = bromide(out). The catalysed reaction is fluoride(in) = fluoride(out). The enzyme catalyses choline(out) = choline(in). Its activity is regulated as follows. Channel activity is redox- and pH-regulated. Anion vs cation selectivity is enhanced when fully oxidized. In terms of biological role, in the soluble state, catalyzes glutaredoxin-like thiol disulfide exchange reactions with reduced glutathione as electron donor. Can insert into membranes and form voltage-dependent multi-ion conductive channels. Membrane insertion seems to be redox-regulated and may occur only under oxidizing conditions. Has alternate cellular functions like a potential role in angiogenesis or in maintaining apical-basolateral membrane polarity during mitosis and cytokinesis. Could also promote endothelial cell proliferation and regulate endothelial morphogenesis (tubulogenesis). Promotes cell-surface expression of HRH3. In Rattus norvegicus (Rat), this protein is Chloride intracellular channel protein 4 (Clic4).